Here is a 327-residue protein sequence, read N- to C-terminus: Quinone oxidoreductase (327 aa).

The protein belongs to the zinc-containing alcohol dehydrogenase family. Quinone oxidoreductase subfamily. In terms of assembly, homodimer.

It catalyses the reaction 2 a quinone + NADPH + H(+) = 2 a 1,4-benzosemiquinone + NADP(+). The sequence is that of Quinone oxidoreductase (qor) from Salmonella typhimurium (strain LT2 / SGSC1412 / ATCC 700720).